The sequence spans 50 residues: Ampulexin 2 (50 aa).

A signal peptide spans 1–26; that stretch reads MKAIMVLFYVMTLTIIGSFSMVSGSP.

Dimer; disulfide-linked. As to expression, expressed in venom sac and, to a lesser extent, in venom gland. Not expressed in brain.

The protein resides in the secreted. Amphipathic peptide which probably adopts an alpha-helical structure. Has no antimicrobial activity against E.coli DH5alpha or B.thuringiensis. Is not cytotoxic in vitro. This Ampulex compressa (Emerald cockroach wasp) protein is Ampulexin 2.